The sequence spans 72 residues: Cell division protein ZapB (72 aa).

Residues methionine 1–valine 72 adopt a coiled-coil conformation. Residues lysine 33–asparagine 57 form a disordered region. Basic and acidic residues predominate over residues leucine 44–asparagine 57.

Belongs to the ZapB family. Homodimer. The ends of the coiled-coil dimer bind to each other, forming polymers. Interacts with FtsZ.

It is found in the cytoplasm. In terms of biological role, non-essential, abundant cell division factor that is required for proper Z-ring formation. It is recruited early to the divisome by direct interaction with FtsZ, stimulating Z-ring assembly and thereby promoting cell division earlier in the cell cycle. Its recruitment to the Z-ring requires functional FtsA or ZipA. This Pasteurella multocida (strain Pm70) protein is Cell division protein ZapB.